We begin with the raw amino-acid sequence, 89 residues long: uncharacterized protein (89 aa).

A topological domain (cytoplasmic) is located at residue methionine 1. Residues 2-22 (LFEIIYIVSSLFYIVSIIYTL) form a helical membrane-spanning segment. Residues 23-89 (MRIKHINTVA…ELKKSKLCEG (67 aa)) lie on the Extracellular side of the membrane.

The protein localises to the host membrane. This is an uncharacterized protein from Sulfolobus islandicus filamentous virus (isolate Iceland/Hveragerdi) (SIFV).